The primary structure comprises 107 residues: Putative pterin-4-alpha-carbinolamine dehydratase (107 aa).

The protein belongs to the pterin-4-alpha-carbinolamine dehydratase family.

The enzyme catalyses (4aS,6R)-4a-hydroxy-L-erythro-5,6,7,8-tetrahydrobiopterin = (6R)-L-erythro-6,7-dihydrobiopterin + H2O. The polypeptide is Putative pterin-4-alpha-carbinolamine dehydratase (Paracoccus denitrificans (strain Pd 1222)).